The sequence spans 910 residues: Alanine--tRNA ligase (910 aa).

Residues 488–505 (RHEEKKEDSKSEKGENTA) show a composition bias toward basic and acidic residues. A disordered region spans residues 488–507 (RHEEKKEDSKSEKGENTAEK). Residues His-614, His-618, Cys-718, and His-722 each contribute to the Zn(2+) site.

It belongs to the class-II aminoacyl-tRNA synthetase family. Zn(2+) serves as cofactor.

Its subcellular location is the cytoplasm. It catalyses the reaction tRNA(Ala) + L-alanine + ATP = L-alanyl-tRNA(Ala) + AMP + diphosphate. Catalyzes the attachment of alanine to tRNA(Ala) in a two-step reaction: alanine is first activated by ATP to form Ala-AMP and then transferred to the acceptor end of tRNA(Ala). Also edits incorrectly charged Ser-tRNA(Ala) and Gly-tRNA(Ala) via its editing domain. This is Alanine--tRNA ligase from Methanococcus aeolicus (strain ATCC BAA-1280 / DSM 17508 / OCM 812 / Nankai-3).